A 457-amino-acid chain; its full sequence is Bifunctional protein GlmU (457 aa).

A pyrophosphorylase region spans residues 1-229 (MYNCAIILAA…YEEIMGVNSR (229 aa)). UDP-N-acetyl-alpha-D-glucosamine is bound by residues 8-11 (LAAG), Lys-22, Gln-73, and 78-79 (GT). Residue Asp-103 coordinates Mg(2+). Residues Gly-140, Glu-155, Asn-170, and Asn-227 each coordinate UDP-N-acetyl-alpha-D-glucosamine. Residue Asn-227 participates in Mg(2+) binding. A linker region spans residues 230-250 (VQLSEAEIVMRKRINHKHMVN). An N-acetyltransferase region spans residues 251 to 457 (GVTFIDCEST…WLDKKGLLKK (207 aa)). UDP-N-acetyl-alpha-D-glucosamine is bound by residues Arg-332 and Lys-350. His-362 (proton acceptor) is an active-site residue. Tyr-365 and Asn-376 together coordinate UDP-N-acetyl-alpha-D-glucosamine. Residues 385-386 (NY), Ala-422, and Arg-439 contribute to the acetyl-CoA site.

In the N-terminal section; belongs to the N-acetylglucosamine-1-phosphate uridyltransferase family. The protein in the C-terminal section; belongs to the transferase hexapeptide repeat family. In terms of assembly, homotrimer. It depends on Mg(2+) as a cofactor.

Its subcellular location is the cytoplasm. It catalyses the reaction alpha-D-glucosamine 1-phosphate + acetyl-CoA = N-acetyl-alpha-D-glucosamine 1-phosphate + CoA + H(+). The enzyme catalyses N-acetyl-alpha-D-glucosamine 1-phosphate + UTP + H(+) = UDP-N-acetyl-alpha-D-glucosamine + diphosphate. Its pathway is nucleotide-sugar biosynthesis; UDP-N-acetyl-alpha-D-glucosamine biosynthesis; N-acetyl-alpha-D-glucosamine 1-phosphate from alpha-D-glucosamine 6-phosphate (route II): step 2/2. It participates in nucleotide-sugar biosynthesis; UDP-N-acetyl-alpha-D-glucosamine biosynthesis; UDP-N-acetyl-alpha-D-glucosamine from N-acetyl-alpha-D-glucosamine 1-phosphate: step 1/1. It functions in the pathway bacterial outer membrane biogenesis; LPS lipid A biosynthesis. In terms of biological role, catalyzes the last two sequential reactions in the de novo biosynthetic pathway for UDP-N-acetylglucosamine (UDP-GlcNAc). The C-terminal domain catalyzes the transfer of acetyl group from acetyl coenzyme A to glucosamine-1-phosphate (GlcN-1-P) to produce N-acetylglucosamine-1-phosphate (GlcNAc-1-P), which is converted into UDP-GlcNAc by the transfer of uridine 5-monophosphate (from uridine 5-triphosphate), a reaction catalyzed by the N-terminal domain. In Clostridium botulinum (strain Kyoto / Type A2), this protein is Bifunctional protein GlmU.